A 111-amino-acid polypeptide reads, in one-letter code: Ig kappa chain V-III region PC 2413 (111 aa).

Residues 1–23 (DIVLTQSPASLAVSLGQRATISC) are framework-1. The cysteines at positions 23 and 92 are disulfide-linked. Positions 24–38 (RASESVVNYGVSLMH) are complementarity-determining-1. The tract at residues 39 to 53 (WFQQKPGQPPKLLIY) is framework-2. Positions 54–60 (GASNRGS) are complementarity-determining-2. The interval 61-92 (GVPARFSGSGSGTDFSLIIHPMEEDDSAMYFC) is framework-3. Residues 93–101 (HQTKEVPWT) are complementarity-determining-3. Residues 102 to 111 (FGGGTDLEIE) form a framework-4 region.

In Mus musculus (Mouse), this protein is Ig kappa chain V-III region PC 2413.